The chain runs to 384 residues: Transcription factor iacI (384 aa).

The protein localises to the nucleus. In terms of biological role, transcription factor; part of the gene cluster that mediates the biosynthesis of iso-A82775C, a enylepoxycyclohexane and biosynthetic precursor of the chloropestolide anticancer natural products. The protein is Transcription factor iacI of Pestalotiopsis fici (strain W106-1 / CGMCC3.15140).